The chain runs to 301 residues: Glycine--tRNA ligase alpha subunit (301 aa).

The protein belongs to the class-II aminoacyl-tRNA synthetase family. As to quaternary structure, tetramer of two alpha and two beta subunits.

Its subcellular location is the cytoplasm. The catalysed reaction is tRNA(Gly) + glycine + ATP = glycyl-tRNA(Gly) + AMP + diphosphate. The protein is Glycine--tRNA ligase alpha subunit of Shewanella frigidimarina (strain NCIMB 400).